Reading from the N-terminus, the 252-residue chain is Petrobactin import ATP-binding protein YclP (252 aa).

The region spanning 2–236 (VEVRNVSKQY…SVLEEIYDMT (235 aa)) is the ABC transporter domain. 34–41 (GPNGAGKS) is a binding site for ATP.

The protein belongs to the ABC transporter superfamily. As to quaternary structure, the complex is composed of two ATP-binding proteins (YclP), two transmembrane proteins (YclN and YclO) and a solute-binding protein (YclQ).

Its subcellular location is the cell membrane. The catalysed reaction is a Fe(III)-siderophore(out) + ATP + H2O = a Fe(III)-siderophore(in) + ADP + phosphate + H(+). In terms of biological role, part of the ABC transporter complex YclNOPQ involved in uptake of ferric-petrobactin. Petrobactin is a photoreactive 3,4-catecholate siderophore produced by many members of the B.cereus group, including B.anthracis. Probably responsible for energy coupling to the transport system. The chain is Petrobactin import ATP-binding protein YclP (yclP) from Bacillus subtilis (strain 168).